A 409-amino-acid chain; its full sequence is Arginine deiminase (409 aa).

The Amidino-cysteine intermediate role is filled by cysteine 399.

Belongs to the arginine deiminase family.

It localises to the cytoplasm. The catalysed reaction is L-arginine + H2O = L-citrulline + NH4(+). The protein operates within amino-acid degradation; L-arginine degradation via ADI pathway; carbamoyl phosphate from L-arginine: step 1/2. The sequence is that of Arginine deiminase from Borrelia duttonii (strain Ly).